The following is a 257-amino-acid chain: Diphthine synthase (257 aa).

S-adenosyl-L-methionine contacts are provided by residues Leu9, Asp85, Val88, 113 to 114 (SI), Leu164, Ala207, and His232.

It belongs to the diphthine synthase family. As to quaternary structure, homodimer.

The enzyme catalyses 2-[(3S)-amino-3-carboxypropyl]-L-histidyl-[translation elongation factor 2] + 3 S-adenosyl-L-methionine = diphthine-[translation elongation factor 2] + 3 S-adenosyl-L-homocysteine + 3 H(+). It participates in protein modification; peptidyl-diphthamide biosynthesis. S-adenosyl-L-methionine-dependent methyltransferase that catalyzes the trimethylation of the amino group of the modified target histidine residue in translation elongation factor 2 (EF-2), to form an intermediate called diphthine. The three successive methylation reactions represent the second step of diphthamide biosynthesis. This Methanococcus aeolicus (strain ATCC BAA-1280 / DSM 17508 / OCM 812 / Nankai-3) protein is Diphthine synthase.